The chain runs to 130 residues: Small ribosomal subunit protein uS8 (130 aa).

The protein belongs to the universal ribosomal protein uS8 family. As to quaternary structure, part of the 30S ribosomal subunit. Contacts proteins S5 and S12.

In terms of biological role, one of the primary rRNA binding proteins, it binds directly to 16S rRNA central domain where it helps coordinate assembly of the platform of the 30S subunit. This chain is Small ribosomal subunit protein uS8, found in Shewanella denitrificans (strain OS217 / ATCC BAA-1090 / DSM 15013).